Reading from the N-terminus, the 531-residue chain is MAPADFPASLPLCVCLLLASGLAQAGRLLVVPMDGSHWFTMQTVVEKLLHKGHEVVVVVPEVSWQLTKPLNFVVKTYAVSHTQEDLNREFKIFIDAQWKSQQEGGILPLLDSPAKGFFELLFSHCRSLFNDKKLVEYLKQTSFDAVFLDPFDVCGLTVAKYFSLPSVVFSRGIFCHYLEDAAQCPSPPSYIPRMLLKFTDTMTFKERTRNLLAYMGERAFCHKFFKSAADIASEVLQTPVTMTDLFSPVSIWLLRTDFVLEFPRPVMPNVIYIGGINCHQGKPLSKEFEAYVNASGEHGIVVFSLGSMVSEIPEKKAMEIAEALGRIPQTVLWRYTGTRPSNLAKNTILVKWLPQNDLLGHPKTRAFITHSGSHGIYEGICNGVPMVMMPLFGDQMDNAKRMETRGAGVTLNVLEMTADDLENALKTVINNKSYKENIMRLSSLHKDRPIEPLDLAVFWVEYVMRHKGAPHLRPAAHDLTWYQYHSLDVIGFLLAIVLTVVFIVFKCCAYGCRKCFGGKGRVKKSHKSKTH.

The first 25 residues, 1–25, serve as a signal peptide directing secretion; it reads MAPADFPASLPLCVCLLLASGLAQA. Residues N293 and N431 are each glycosylated (N-linked (GlcNAc...) asparagine). The helical transmembrane segment at 489-509 threads the bilayer; the sequence is VIGFLLAIVLTVVFIVFKCCA.

Belongs to the UDP-glycosyltransferase family. As to quaternary structure, homodimer. Homooligomer. Interacts with UGT1A1, UGT1A3, UGT1A4, UGT1A6, UGT1A8, UGT1A9 and UGT1A10 to form heterodimers. As to expression, widely expressed with highest levels detected in colon and kidney.

It is found in the endoplasmic reticulum membrane. It catalyses the reaction glucuronate acceptor + UDP-alpha-D-glucuronate = acceptor beta-D-glucuronoside + UDP + H(+). The enzyme catalyses 17alpha-estradiol + UDP-alpha-D-glucuronate = 17alpha-estradiol 3-O-(beta-D-glucuronate) + UDP + H(+). The catalysed reaction is prunetin + UDP-alpha-D-glucuronate = prunetin-5-O-beta-D-glucuronide + UDP. It carries out the reaction 5-epi-5-F2t-IsoP + UDP-alpha-D-glucuronate = 5-epi-5-F2t-IsoP-glucuronide + UDP + H(+). It catalyses the reaction (E)-ferulate + UDP-alpha-D-glucuronate = (E)-ferulic acid beta-D-glucuronate ester + UDP. The enzyme catalyses candesartan + UDP-alpha-D-glucuronate = candesartan O-beta-D-glucuronoside + UDP. The catalysed reaction is SN-38 + UDP-alpha-D-glucuronate = SN-38 O-beta-D-glucuronide + UDP + H(+). It carries out the reaction mycophenolate + UDP-alpha-D-glucuronate = mycophenolate 7-O-beta-D-glucuronide + UDP + H(+). In terms of biological role, UDP-glucuronosyltransferase (UGT) that catalyzes phase II biotransformation reactions in which lipophilic substrates are conjugated with glucuronic acid to increase the metabolite's water solubility, thereby facilitating excretion into either the urine or bile. Essential for the elimination and detoxification of drugs, xenobiotics and endogenous compounds. Catalyzes the glucuronidation of endogenous estrogen hormone epiestradiol. Involved in the glucuronidation of F2-isoprostane (5-epi-5-F2t-IsoP). Involved in the glucuronidation of the phytochemical ferulic acid at the carboxylic acid group. Also catalyzes the glucuronidation of the isoflavones genistein, daidzein, glycitein, formononetin, biochanin A and prunetin, which are phytoestrogens with anticancer and cardiovascular properties. Involved in the glucuronidation of the AGTR1 angiotensin receptor antagonist caderastan, a drug which can inhibit the effect of angiotensin II. Involved in the biotransformation of 7-ethyl-10-hydroxycamptothecin (SN-38), the pharmacologically active metabolite of the anticancer drug irinotecan. Also metabolizes mycophenolate, an immunosuppressive agent. The sequence is that of UDP-glucuronosyltransferase 1A7 from Mus musculus (Mouse).